Here is an 880-residue protein sequence, read N- to C-terminus: Tyrosine-protein kinase receptor TYRO3 (880 aa).

The first 30 residues, 1–30 (MALRRSMGRPGLRPLLLAGLASLLLPGSAA), serve as a signal peptide directing secretion. Ig-like C2-type domains are found at residues 31–118 (AGLK…TKIS) and 129–210 (PFFT…AIIR). Topologically, residues 31–419 (AGLKLMGAPV…QGPPHSRTSW (389 aa)) are extracellular. N-linked (GlcNAc...) asparagine glycosylation is found at Asn-53, Asn-75, Asn-181, Asn-220, Asn-230, Asn-283, Asn-356, and Asn-370. Cystine bridges form between Cys-54-Cys-107 and Cys-150-Cys-193. 2 Fibronectin type-III domains span residues 217–310 (APFN…TKGL) and 315–406 (APQN…SHDH). Residues 420–440 (VPVVLGVLTALITAAALALIL) form a helical membrane-spanning segment. Residues 441–880 (LRKRRKETRF…QQGLLPHSSC (440 aa)) lie on the Cytoplasmic side of the membrane. The residue at position 456 (Ser-456) is a Phosphoserine. Residues 508–785 (FTLGRMLGKG…LENILGHLSV (278 aa)) form the Protein kinase domain. ATP is bound by residues 514-522 (LGKGEFGSV) and Lys-540. Asp-645 acts as the Proton acceptor in catalysis. Phosphotyrosine; by autocatalysis occurs at positions 671, 675, 676, and 794. 2 disordered regions span residues 804 to 827 (AENG…GSGM) and 842 to 864 (SPGG…LNEN). A phosphoserine mark is found at Ser-808 and Ser-859. Polar residues predominate over residues 852 to 864 (QLEQQPESPLNEN).

Belongs to the protein kinase superfamily. Tyr protein kinase family. AXL/UFO subfamily. Monomer and homodimer. Interacts (via N-terminus) with extracellular ligands TULP1 and GAS6. Interacts with PIK3R1; this interaction increases PI3-kinase activity. Autophosphorylated. As to expression, abundant in the brain and lower levels in other tissues.

Its subcellular location is the cell membrane. The enzyme catalyses L-tyrosyl-[protein] + ATP = O-phospho-L-tyrosyl-[protein] + ADP + H(+). In terms of biological role, receptor tyrosine kinase that transduces signals from the extracellular matrix into the cytoplasm by binding to several ligands including TULP1 or GAS6. Regulates many physiological processes including cell survival, migration and differentiation. Ligand binding at the cell surface induces dimerization and autophosphorylation of TYRO3 on its intracellular domain that provides docking sites for downstream signaling molecules. Following activation by ligand, interacts with PIK3R1 and thereby enhances PI3-kinase activity. Activates the AKT survival pathway, including nuclear translocation of NF-kappa-B and up-regulation of transcription of NF-kappa-B-regulated genes. TYRO3 signaling plays a role in various processes such as neuron protection from excitotoxic injury, platelet aggregation and cytoskeleton reorganization. Also plays an important role in inhibition of Toll-like receptors (TLRs)-mediated innate immune response by activating STAT1, which selectively induces production of suppressors of cytokine signaling SOCS1 and SOCS3. The polypeptide is Tyrosine-protein kinase receptor TYRO3 (Tyro3) (Rattus norvegicus (Rat)).